A 271-amino-acid polypeptide reads, in one-letter code: Formamidopyrimidine-DNA glycosylase (271 aa).

The active-site Schiff-base intermediate with DNA is the P2. Residue E3 is the Proton donor of the active site. The active-site Proton donor; for beta-elimination activity is K57. Residues H90, R109, and R151 each contribute to the DNA site. Residues 236-270 (MVYGRAGEACVTCKTKLQEIRQSNRSSVFCPSCQQ) form an FPG-type zinc finger. R260 acts as the Proton donor; for delta-elimination activity in catalysis.

This sequence belongs to the FPG family. In terms of assembly, monomer. Zn(2+) serves as cofactor.

The catalysed reaction is Hydrolysis of DNA containing ring-opened 7-methylguanine residues, releasing 2,6-diamino-4-hydroxy-5-(N-methyl)formamidopyrimidine.. It catalyses the reaction 2'-deoxyribonucleotide-(2'-deoxyribose 5'-phosphate)-2'-deoxyribonucleotide-DNA = a 3'-end 2'-deoxyribonucleotide-(2,3-dehydro-2,3-deoxyribose 5'-phosphate)-DNA + a 5'-end 5'-phospho-2'-deoxyribonucleoside-DNA + H(+). Functionally, involved in base excision repair of DNA damaged by oxidation or by mutagenic agents. Acts as a DNA glycosylase that recognizes and removes damaged bases. Has a preference for oxidized purines, such as 7,8-dihydro-8-oxoguanine (8-oxoG). Has AP (apurinic/apyrimidinic) lyase activity and introduces nicks in the DNA strand. Cleaves the DNA backbone by beta-delta elimination to generate a single-strand break at the site of the removed base with both 3'- and 5'-phosphates. The chain is Formamidopyrimidine-DNA glycosylase from Colwellia psychrerythraea (strain 34H / ATCC BAA-681) (Vibrio psychroerythus).